The following is a 475-amino-acid chain: L-seryl-tRNA(Sec) selenium transferase (475 aa).

Residue K295 is modified to N6-(pyridoxal phosphate)lysine.

The protein belongs to the SelA family. Requires pyridoxal 5'-phosphate as cofactor.

The protein localises to the cytoplasm. The enzyme catalyses L-seryl-tRNA(Sec) + selenophosphate + H(+) = L-selenocysteinyl-tRNA(Sec) + phosphate. It participates in aminoacyl-tRNA biosynthesis; selenocysteinyl-tRNA(Sec) biosynthesis; selenocysteinyl-tRNA(Sec) from L-seryl-tRNA(Sec) (bacterial route): step 1/1. In terms of biological role, converts seryl-tRNA(Sec) to selenocysteinyl-tRNA(Sec) required for selenoprotein biosynthesis. This chain is L-seryl-tRNA(Sec) selenium transferase, found in Desulfovibrio desulfuricans (strain ATCC 27774 / DSM 6949 / MB).